We begin with the raw amino-acid sequence, 525 residues long: GMP synthase [glutamine-hydrolyzing] (525 aa).

One can recognise a Glutamine amidotransferase type-1 domain in the interval 8 to 207 (KILILDFGSQ…ALDICGCAAN (200 aa)). The active-site Nucleophile is Cys85. Residues His181 and Glu183 contribute to the active site. Positions 208–400 (WKPSSIIEDA…LGLPYNMLYR (193 aa)) constitute a GMPS ATP-PPase domain. 235–241 (SGGVDSS) is a binding site for ATP.

In terms of assembly, homodimer.

The catalysed reaction is XMP + L-glutamine + ATP + H2O = GMP + L-glutamate + AMP + diphosphate + 2 H(+). It functions in the pathway purine metabolism; GMP biosynthesis; GMP from XMP (L-Gln route): step 1/1. Catalyzes the synthesis of GMP from XMP. The polypeptide is GMP synthase [glutamine-hydrolyzing] (Shewanella oneidensis (strain ATCC 700550 / JCM 31522 / CIP 106686 / LMG 19005 / NCIMB 14063 / MR-1)).